A 296-amino-acid chain; its full sequence is Probable GTP 3',8-cyclase (296 aa).

The region spanning 5 to 230 (EYGRVVTNLR…HRRTQYFTPK (226 aa)) is the Radical SAM core domain. Position 14 (Arg-14) interacts with GTP. Residues Cys-21 and Cys-25 each contribute to the [4Fe-4S] cluster site. Tyr-27 is an S-adenosyl-L-methionine binding site. A [4Fe-4S] cluster-binding site is contributed by Cys-28. Lys-61 contacts GTP. Gly-65 contributes to the S-adenosyl-L-methionine binding site. Thr-89 lines the GTP pocket. Residue Ser-113 coordinates S-adenosyl-L-methionine. Lys-150 serves as a coordination point for GTP. [4Fe-4S] cluster contacts are provided by Cys-245 and Cys-248. 250-252 (RMR) is a binding site for GTP. Position 262 (Cys-262) interacts with [4Fe-4S] cluster.

This sequence belongs to the radical SAM superfamily. MoaA family. [4Fe-4S] cluster is required as a cofactor.

The enzyme catalyses GTP + AH2 + S-adenosyl-L-methionine = (8S)-3',8-cyclo-7,8-dihydroguanosine 5'-triphosphate + 5'-deoxyadenosine + L-methionine + A + H(+). It participates in cofactor biosynthesis; molybdopterin biosynthesis. Its function is as follows. Catalyzes the cyclization of GTP to (8S)-3',8-cyclo-7,8-dihydroguanosine 5'-triphosphate. The protein is Probable GTP 3',8-cyclase of Archaeoglobus fulgidus (strain ATCC 49558 / DSM 4304 / JCM 9628 / NBRC 100126 / VC-16).